An 858-amino-acid polypeptide reads, in one-letter code: MAELSEEALLSVLPTIRVPKAGDRVHKDECAFSFDTPESEGGLYICMNTFLGFGKQYVERHFNKTGPRVYLHLRRTRRPKEEDPTTGTGDPPRKKPTRLAIGVEGGFDLSEEKFELDEDVKIVILPDYLEIARDGLGGLPDIVRDRVTSAVEALLSADSASRKQEVQAWDGEVRQVSKHAFSLKQLDNPARIPPCGWECSKCDMRENLWLNLTDGSILCGRRYFDGSGGNNHAVEHYRETGYPLAVKLGTITPDGADVYSYDEDDMVLDPSLAEHLSHFGIDMLKMQKTDKTMTELEIDMNQRIGEWELIQESGVPLKPLFGPGYTGIRNLGNSCYLNSVVLVLFSIPDFQRKYVDKLEKIFQNAPTDPTQDFSTQVAKLGHGLLSGEYSKPVPESGDGERVPEQKEVQDGIAPRMFKALIGKGHPEFSTNRQQDAQEFFLHLINMVERNCRSSENPNEVFRFLVEEKIKCLATEKVKYTQRVDYIMQLPVPMDAALNKEELLEYEEKKRQAEEEKMALPELVRAQVPFSSCLEAYGAPEQVDDFWSTALQAKSVAVKTTRFASFPDYLVIQIKKFTFGLDWVPKKLDVSIEMPEELDISQLRGTGLQPGEEELPDIAPPLVTPDEPKGSLGFYGNEDEDSFCSPHFSSPTSPMLDESVIIQLVEMGFPMDACRKAVYYTGNSGAEAAMNWVMSHMDDPDFANPLILPGSSGPGSTSAAADPPPEDCVTTIVSMGFSRDQALKALRATNNSLERAVDWIFSHIDDLDAEAAMDISEGRSAADSISESVPVGPKVRDGPGKYQLFAFISHMGTSTMCGHYVCHIKKEGRWVIYNDQKVCASEKPPKDLGYIYFYQRVAS.

Alanine 2 carries the post-translational modification N-acetylalanine. The segment at 74 to 96 (RRTRRPKEEDPTTGTGDPPRKKP) is disordered. Lysine 113 is covalently cross-linked (Glycyl lysine isopeptide (Lys-Gly) (interchain with G-Cter in SUMO)). Residues serine 149 and serine 156 each carry the phosphoserine modification. Residues 175 to 283 (QVSKHAFSLK…EHLSHFGIDM (109 aa)) form a UBP-type; degenerate zinc finger. The cysteines at positions 195 and 816 are disulfide-linked. Zn(2+) contacts are provided by cysteine 199 and cysteine 202. Tryptophan 209 lines the substrate pocket. Residue cysteine 219 coordinates Zn(2+). 221–224 (RRYF) serves as a coordination point for substrate. A Zn(2+)-binding site is contributed by histidine 232. 3 residues coordinate substrate: tyrosine 259, tyrosine 261, and aspartate 264. Threonine 292 is modified (phosphothreonine). The 531-residue stretch at 326–856 (TGIRNLGNSC…LGYIYFYQRV (531 aa)) folds into the USP domain. Cysteine 335 (nucleophile) is an active-site residue. Threonine 623 carries the phosphothreonine modification. UBA domains lie at 654-695 (MLDE…VMSH) and 722-762 (PPPE…IFSH). Residues serine 779, serine 783, and serine 785 each carry the phosphoserine modification. Histidine 818 acts as the Proton acceptor in catalysis.

The protein belongs to the peptidase C19 family. As to quaternary structure, homodimer. Interacts with TRIML1. In terms of processing, ubiquitinated by SMURF1; leading to proteasomal degradation. SUMOylated at Lys-113; SUMOylation affects the interaction with Cav3.2 channels.

Its subcellular location is the cytoplasm. It is found in the stress granule. It localises to the nucleus. It carries out the reaction Thiol-dependent hydrolysis of ester, thioester, amide, peptide and isopeptide bonds formed by the C-terminal Gly of ubiquitin (a 76-residue protein attached to proteins as an intracellular targeting signal).. Functionally, deubiquitinating enzyme that participates in a wide range of cellular processes by specifically cleaving isopeptide bonds between ubiquitin and substrate proteins or ubiquitin itself. Affects thereby important cellular signaling pathways such as NF-kappa-B, Wnt/beta-catenin, and cytokine production by regulating ubiquitin-dependent protein degradation. Participates in the activation of the Wnt signaling pathway by promoting FOXM1 deubiquitination and stabilization that induces the recruitment of beta-catenin to Wnt target gene promoter. Regulates the assembly and disassembly of heat-induced stress granules by mediating the hydrolysis of unanchored ubiquitin chains. Promotes lipopolysaccharide-induced apoptosis and inflammatory response by stabilizing the TXNIP protein. Affects T-cell biology by stabilizing the inhibitory receptor on T-cells PDC1. Acts as a negative regulator of autophagy by regulating ULK1 at both protein and mRNA levels. Acts also as a negative regulator of type I interferon production by simultaneously removing both 'Lys-48'-linked unanchored and 'Lys-63'-linked anchored polyubiquitin chains on the transcription factor IRF3. Modulates the stability of DNA mismatch repair protein MLH1 and counteracts the effect of the ubiquitin ligase UBR4. Upon activation by insulin, it gets phosphorylated through mTORC1-mediated phosphorylation to enhance YTHDF1 stability by removing 'Lys-11'-linked polyubiquitination. May also deubiquitinate other substrates such as the calcium channel CACNA1H. The chain is Ubiquitin carboxyl-terminal hydrolase 5 (UBP5) from Pongo abelii (Sumatran orangutan).